The primary structure comprises 369 residues: Anhydro-N-acetylmuramic acid kinase (369 aa).

12–19 (GTSMDGVD) serves as a coordination point for ATP.

This sequence belongs to the anhydro-N-acetylmuramic acid kinase family.

The catalysed reaction is 1,6-anhydro-N-acetyl-beta-muramate + ATP + H2O = N-acetyl-D-muramate 6-phosphate + ADP + H(+). It participates in amino-sugar metabolism; 1,6-anhydro-N-acetylmuramate degradation. Its pathway is cell wall biogenesis; peptidoglycan recycling. Functionally, catalyzes the specific phosphorylation of 1,6-anhydro-N-acetylmuramic acid (anhMurNAc) with the simultaneous cleavage of the 1,6-anhydro ring, generating MurNAc-6-P. Is required for the utilization of anhMurNAc either imported from the medium or derived from its own cell wall murein, and thus plays a role in cell wall recycling. In Shewanella putrefaciens (strain CN-32 / ATCC BAA-453), this protein is Anhydro-N-acetylmuramic acid kinase.